A 505-amino-acid polypeptide reads, in one-letter code: Phase 1 flagellin (505 aa).

The protein belongs to the bacterial flagellin family.

It localises to the secreted. Its subcellular location is the bacterial flagellum. In terms of biological role, flagellin is the subunit protein which polymerizes to form the filaments of bacterial flagella. This is Phase 1 flagellin (fliC) from Salmonella naestved.